A 433-amino-acid chain; its full sequence is ATP-dependent protease ATPase subunit HslU (433 aa).

ATP is bound by residues I18, 60–65, D246, E311, and R383; that span reads GVGKTE.

Belongs to the ClpX chaperone family. HslU subfamily. In terms of assembly, a double ring-shaped homohexamer of HslV is capped on each side by a ring-shaped HslU homohexamer. The assembly of the HslU/HslV complex is dependent on binding of ATP.

It is found in the cytoplasm. Its function is as follows. ATPase subunit of a proteasome-like degradation complex; this subunit has chaperone activity. The binding of ATP and its subsequent hydrolysis by HslU are essential for unfolding of protein substrates subsequently hydrolyzed by HslV. HslU recognizes the N-terminal part of its protein substrates and unfolds these before they are guided to HslV for hydrolysis. This Cereibacter sphaeroides (strain ATCC 17025 / ATH 2.4.3) (Rhodobacter sphaeroides) protein is ATP-dependent protease ATPase subunit HslU.